The chain runs to 258 residues: Tryptophan synthase alpha chain (258 aa).

Active-site proton acceptor residues include E47 and D58.

It belongs to the TrpA family. In terms of assembly, tetramer of two alpha and two beta chains.

It carries out the reaction (1S,2R)-1-C-(indol-3-yl)glycerol 3-phosphate + L-serine = D-glyceraldehyde 3-phosphate + L-tryptophan + H2O. Its pathway is amino-acid biosynthesis; L-tryptophan biosynthesis; L-tryptophan from chorismate: step 5/5. The alpha subunit is responsible for the aldol cleavage of indoleglycerol phosphate to indole and glyceraldehyde 3-phosphate. In Bacillus cereus (strain ATCC 14579 / DSM 31 / CCUG 7414 / JCM 2152 / NBRC 15305 / NCIMB 9373 / NCTC 2599 / NRRL B-3711), this protein is Tryptophan synthase alpha chain.